Consider the following 404-residue polypeptide: Glycosylated lysosomal membrane protein (404 aa).

A signal peptide spans 1-26 (MSGYEKPSRGWGFCALSPVLLSLLMA). Residues 27–370 (APLGLLGEET…VDALSPLVLG (344 aa)) are Lumenal-facing. 5 N-linked (GlcNAc...) asparagine glycosylation sites follow: Asn-63, Asn-132, Asn-157, Asn-185, and Asn-228. The helical transmembrane segment at 371–391 (IMAVALGAPALMLLAGGLFLL) threads the bilayer. Residues 392 to 404 (LGRKRDSEYQSIN) lie on the Cytoplasmic side of the membrane. A Lysosomal targeting motif motif is present at residues 400–404 (YQSIN).

Belongs to the GLMP family. As to quaternary structure, interacts (via lumenal domain) with lysosomal protein MFSD1; the interaction starts while both proteins are still in the endoplasmic reticulum and is required for stabilization of MFSD1 in lysosomes but has no direct effect on its targeting to lysosomes or transporter activity. Post-translationally, highly N-glycosylated. N-glycosylation is essential for GLMP stability and for MFSD1 lysosomal localization.

It is found in the lysosome membrane. Its function is as follows. Required to protect lysosomal transporter MFSD1 from lysosomal proteolysis and for MFSD1 lysosomal localization. The protein is Glycosylated lysosomal membrane protein of Bos taurus (Bovine).